The chain runs to 258 residues: Tryptophan synthase alpha chain (258 aa).

Residues Glu47 and Asp58 each act as proton acceptor in the active site.

This sequence belongs to the TrpA family. As to quaternary structure, tetramer of two alpha and two beta chains.

It catalyses the reaction (1S,2R)-1-C-(indol-3-yl)glycerol 3-phosphate + L-serine = D-glyceraldehyde 3-phosphate + L-tryptophan + H2O. It functions in the pathway amino-acid biosynthesis; L-tryptophan biosynthesis; L-tryptophan from chorismate: step 5/5. Its function is as follows. The alpha subunit is responsible for the aldol cleavage of indoleglycerol phosphate to indole and glyceraldehyde 3-phosphate. The chain is Tryptophan synthase alpha chain from Bacillus cereus (strain ZK / E33L).